We begin with the raw amino-acid sequence, 120 residues long: uncharacterized protein (120 aa).

This sequence to M.jannaschii MJ0361.

This is an uncharacterized protein from Methanocaldococcus jannaschii (strain ATCC 43067 / DSM 2661 / JAL-1 / JCM 10045 / NBRC 100440) (Methanococcus jannaschii).